We begin with the raw amino-acid sequence, 64 residues long: Large ribosomal subunit protein uL1 (64 aa).

Belongs to the universal ribosomal protein uL1 family. Part of the 50S ribosomal subunit.

Functionally, binds directly to 23S rRNA. The L1 stalk is quite mobile in the ribosome, and is involved in E site tRNA release. Its function is as follows. Protein L1 is also a translational repressor protein, it controls the translation of the L11 operon by binding to its mRNA. The protein is Large ribosomal subunit protein uL1 (rplA) of Streptomyces lavendulae.